A 405-amino-acid chain; its full sequence is Acetylornithine aminotransferase 1 (405 aa).

Pyridoxal 5'-phosphate-binding positions include 103–104 (GA) and phenylalanine 136. Residue arginine 139 coordinates N(2)-acetyl-L-ornithine. Pyridoxal 5'-phosphate is bound at residue 221 to 224 (DEVQ). Lysine 250 is modified (N6-(pyridoxal phosphate)lysine). Serine 278 is a N(2)-acetyl-L-ornithine binding site. Residue threonine 279 coordinates pyridoxal 5'-phosphate.

Belongs to the class-III pyridoxal-phosphate-dependent aminotransferase family. ArgD subfamily. In terms of assembly, homodimer. Pyridoxal 5'-phosphate serves as cofactor.

The protein resides in the cytoplasm. The catalysed reaction is N(2)-acetyl-L-ornithine + 2-oxoglutarate = N-acetyl-L-glutamate 5-semialdehyde + L-glutamate. It participates in amino-acid biosynthesis; L-arginine biosynthesis; N(2)-acetyl-L-ornithine from L-glutamate: step 4/4. This is Acetylornithine aminotransferase 1 from Bradyrhizobium diazoefficiens (strain JCM 10833 / BCRC 13528 / IAM 13628 / NBRC 14792 / USDA 110).